The following is a 736-amino-acid chain: Epithelial splicing regulatory protein 2 (736 aa).

RRM domains follow at residues 224-301 (TVIR…KATG), 325-405 (MIIR…RSTA), and 659-736 (ALVR…ACCE).

Belongs to the ESRP family.

The protein resides in the nucleus. Functionally, mRNA splicing factor that regulates the formation of epithelial cell-specific isoforms. Specifically regulates the expression of FGFR2-IIIb, an epithelial cell-specific isoform of fgfr2. Acts by directly binding specific sequences in mRNAs. Binds the GU-rich sequence motifs in the ISE/ISS-3, a cis-element regulatory region present in the mRNA of fgfr2. This is Epithelial splicing regulatory protein 2 (esrp2) from Danio rerio (Zebrafish).